The primary structure comprises 251 residues: Zinc import ATP-binding protein ZnuC (251 aa).

An ABC transporter domain is found at 5–220 (VSLENVSVSF…PEFISMFGPR (216 aa)). An ATP-binding site is contributed by 37 to 44 (GPNGAGKS).

This sequence belongs to the ABC transporter superfamily. Zinc importer (TC 3.A.1.15.5) family. As to quaternary structure, the complex is composed of two ATP-binding proteins (ZnuC), two transmembrane proteins (ZnuB) and a solute-binding protein (ZnuA).

It is found in the cell inner membrane. The catalysed reaction is Zn(2+)(out) + ATP(in) + H2O(in) = Zn(2+)(in) + ADP(in) + phosphate(in) + H(+)(in). Its function is as follows. Part of the ABC transporter complex ZnuABC involved in zinc import. Responsible for energy coupling to the transport system. The protein is Zinc import ATP-binding protein ZnuC of Shigella flexneri serotype 5b (strain 8401).